The sequence spans 676 residues: E3 ubiquitin-protein ligase ICP0 (676 aa).

An RING-type zinc finger spans residues 13 to 52; it reads CCICLDAITGAARALPCLHAFCLACIRRWLEGRPTCPLCK. Disordered regions lie at residues 101 to 135, 266 to 486, and 555 to 676; these read DLTAADGEAPGAGGEAGAAGGSEAGGGAGGAEAAG, HLIP…PAPI, and AAIS…AWRQ. A compositionally biased stretch (gly residues) spans 110-135; it reads PGAGGEAGAAGGSEAGGGAGGAEAAG. Acidic residues predominate over residues 286 to 303; the sequence is SDSDSEGSEDDSWSESEE. Residues 304-314 show a composition bias toward low complexity; that stretch reads SSSGLSTSDLT. Over residues 315 to 328 the composition is skewed to acidic residues; it reads AIDDTETEPETDAE. Positions 351–361 are enriched in polar residues; that stretch reads YVSTRGRQTPA. Low complexity-rich tracts occupy residues 375-388 and 397-411; these read GRAAAVSAPPSSRS and LPAAPRAAPAAQARA. The segment covering 422–439 has biased composition (gly residues); that stretch reads GAGLGVAAGETAGWGVGS. Positions 440–450 are enriched in basic and acidic residues; that stretch reads EEGRGERRAKL. Over residues 474–484 the composition is skewed to pro residues; that stretch reads TPAPAPAPAPA. Low complexity predominate over residues 555–597; that stretch reads AAISTRAPTPSPAGRAPAADPRRAGAPALAGAARAEAGRNGNP.

Auto-ubiquitinated. Post-translationally, the strongly acidic region might serve as a transcriptional activation domain, possibly regulated through phosphorylation by casein kinase II.

The enzyme catalyses S-ubiquitinyl-[E2 ubiquitin-conjugating enzyme]-L-cysteine + [acceptor protein]-L-lysine = [E2 ubiquitin-conjugating enzyme]-L-cysteine + N(6)-ubiquitinyl-[acceptor protein]-L-lysine.. Evades nuclear antiviral defenses triggered by dsDNA viruses. Acts during the initial stages of lytic infection and the reactivation of latent viral genome. Prevents the antiviral effect of nuclear bodies by degrading host PML and SP100. In Bos taurus (Bovine), this protein is E3 ubiquitin-protein ligase ICP0 (BICP0).